Here is a 281-residue protein sequence, read N- to C-terminus: AT-hook motif nuclear-localized protein 20 (281 aa).

Disordered stretches follow at residues Met43–Phe85 and Met216–Gly247. Positions Arg67 to Lys79 form a DNA-binding region, a.T hook. Positions Pro91–His229 constitute a PPC domain.

Its subcellular location is the nucleus. Transcription factor that specifically binds AT-rich DNA sequences related to the nuclear matrix attachment regions (MARs). Negatively regulates plant innate immunity (PTI) to pathogens through the down-regulation of the PAMP-triggered NHO1 and FRK1 expression. The protein is AT-hook motif nuclear-localized protein 20 of Arabidopsis thaliana (Mouse-ear cress).